We begin with the raw amino-acid sequence, 106 residues long: Protein yippee-like At4g27745 (106 aa).

The 98-residue stretch at 8-105 (RLYSCCNCRN…FEKAKIVKED (98 aa)) folds into the Yippee domain. Zn(2+) contacts are provided by C12, C15, C68, and C71.

This sequence belongs to the yippee family.

This Arabidopsis thaliana (Mouse-ear cress) protein is Protein yippee-like At4g27745.